Consider the following 160-residue polypeptide: Cathelin-related peptide SC5 (160 aa).

Positions 1–29 (METQRASLSLGRCSLWLLLLGLALPSASA) are cleaved as a signal peptide. Residues 30-131 (QVLSYREAVL…DITCAEPQSV (102 aa)) constitute a propeptide that is removed on maturation. 2 disulfide bridges follow: cysteine 86/cysteine 97 and cysteine 108/cysteine 125.

The protein belongs to the cathelicidin family.

It localises to the secreted. In terms of biological role, broad spectrum bactericidal agent. This chain is Cathelin-related peptide SC5, found in Ovis aries (Sheep).